Reading from the N-terminus, the 250-residue chain is Probable transcriptional regulatory protein Cphamn1_0542 (250 aa).

The protein belongs to the TACO1 family.

Its subcellular location is the cytoplasm. This chain is Probable transcriptional regulatory protein Cphamn1_0542, found in Chlorobium phaeobacteroides (strain BS1).